Here is a 230-residue protein sequence, read N- to C-terminus: Endonuclease NucS (230 aa).

It belongs to the NucS endonuclease family.

The protein resides in the cytoplasm. In terms of biological role, cleaves both 3' and 5' ssDNA extremities of branched DNA structures. This is Endonuclease NucS from Corynebacterium glutamicum (strain R).